The chain runs to 72 residues: Small ribosomal subunit protein bS18c (72 aa).

It belongs to the bacterial ribosomal protein bS18 family. In terms of assembly, part of the 30S ribosomal subunit.

It localises to the plastid. Its subcellular location is the chloroplast. This Phaeodactylum tricornutum (strain CCAP 1055/1) protein is Small ribosomal subunit protein bS18c.